The following is a 247-amino-acid chain: DNA repair protein RecO (247 aa).

The protein belongs to the RecO family.

Functionally, involved in DNA repair and RecF pathway recombination. This chain is DNA repair protein RecO, found in Caldanaerobacter subterraneus subsp. tengcongensis (strain DSM 15242 / JCM 11007 / NBRC 100824 / MB4) (Thermoanaerobacter tengcongensis).